Here is a 911-residue protein sequence, read N- to C-terminus: Desmoglein-1-gamma (911 aa).

The N-terminal stretch at 1–23 (MDWHSFRIAALLLTSLVVLEVNS) is a signal peptide. Residues 24 to 49 (EFQIQVRDHNAKNGTIKWHSIRRQKR) constitute a propeptide that is removed on maturation. 3 consecutive Cadherin domains span residues 50–157 (EWIK…PPVF), 158–269 (SMTT…IPYL), and 270–389 (EQSS…QPGS). The Extracellular segment spans residues 50 to 519 (EWIKFAAACR…PNVDNVHFGP (470 aa)). Asn110 is a glycosylation site (N-linked (GlcNAc...) (high mannose) asparagine). Asn180 carries N-linked (GlcNAc...) asparagine glycosylation. Asn401 carries an N-linked (GlcNAc...) asparagine glycan. Residues 520–540 (AGIGLLIMGFLVLGLVPFLLI) traverse the membrane as a helical segment. Residues 541 to 911 (SCDCGGAPGG…GMIGNLSIPP (371 aa)) are Cytoplasmic-facing. Desmoglein repeat repeat units lie at residues 783 to 809 (AYPSGPGVQHPMLIPDPLGYGNITVRE), 810 to 839 (SYTTSGTLKPSVHFHDNQQASNVVVTERVV), 840 to 869 (GPISGADLHGMLEIPALRDGTNVIVTERVI), and 870 to 897 (APGSSLPNSLTIPNPRETSNVVVTERVI). The stretch at 898 to 911 (QPTSGMIGNLSIPP) is one Desmoglein repeat 5; truncated repeat.

Interacts with DSC3; there is evidence to suggest that the interaction promotes cell-cell adhesion of keratinocytes. Expressed in epidermis, brain, liver, skeletal, muscle and testis.

It localises to the cell membrane. The protein localises to the cell junction. Its subcellular location is the desmosome. It is found in the cytoplasm. The protein resides in the nucleus. Its function is as follows. Component of intercellular desmosome junctions. Involved in the interaction of plaque proteins and intermediate filaments mediating cell-cell adhesion. This chain is Desmoglein-1-gamma (Dsg1c), found in Mus musculus (Mouse).